The primary structure comprises 291 residues: 4-hydroxy-tetrahydrodipicolinate synthase (291 aa).

Threonine 44 serves as a coordination point for pyruvate. The Proton donor/acceptor role is filled by tyrosine 132. Lysine 160 serves as the catalytic Schiff-base intermediate with substrate. Isoleucine 202 serves as a coordination point for pyruvate.

Belongs to the DapA family. As to quaternary structure, homotetramer; dimer of dimers.

The protein localises to the cytoplasm. The enzyme catalyses L-aspartate 4-semialdehyde + pyruvate = (2S,4S)-4-hydroxy-2,3,4,5-tetrahydrodipicolinate + H2O + H(+). It participates in amino-acid biosynthesis; L-lysine biosynthesis via DAP pathway; (S)-tetrahydrodipicolinate from L-aspartate: step 3/4. In terms of biological role, catalyzes the condensation of (S)-aspartate-beta-semialdehyde [(S)-ASA] and pyruvate to 4-hydroxy-tetrahydrodipicolinate (HTPA). In Syntrophus aciditrophicus (strain SB), this protein is 4-hydroxy-tetrahydrodipicolinate synthase.